The sequence spans 819 residues: MFERFTEKAIKVIMLAQEEARRLGHNFVGTEQILLGLIGEGTGIAAKVLKSMGVNLKDARVEVEKIIGRGSGFVAVEIPFTPRAKRVLELSLEEARQLGHNYIGTEHLLLGLIREGEGVAARVLENLALDLTKVRTQVIRLLGDTAEVSATNGQTKGKTPTLEEFGSNLTQKAAEGKLDPVIGRQKEIERVIQILGRRTKNNPILIGEPGVGKTAIAEGLAQRINNRDVPDILEDKRVVTLDIGLLVAGTKYRGEFEERLKKIIDEIRVANNVILVIDEVHTLIGAGAAEGAIDAANILKPALARGEMQCIGATTLEEYRKHIEKDSALERRFQPVMVGEPSVEETIEILYGLRDRYEKHHKLVISDEALSAAAKFADQYIADRFLPDKAIDLIDEAGSRVRLMNSQLPPAARELDKELREILKQKDEAVRSQDFETAGQLRDREMEIKAQIAAIAHSKKGDEENTKEVSVVTEEDIAQIVAAWTGIPVNKMTRSESEKLLQMEETLHGRIIGQDEAVVAVSKAIRRARVGLKNPNRPIASFIFSGPTGVGKTELTKALASYFFGSEEAMVRLDMSEYMERHTVSKLIGSPPGYVGYNEGGQLTESVRRRPYTVVLFDEIEKGHPDVFNLLLQILEDGRLTDSKGRTVDFKNTLLILTSNVGSKVIEKGGGGLGFDLSEDQTESQYGRIKALVNEELKQYFRPEFLNRLDEIIVFRQLTKDEVGEIAEIMLKEVFTRISEKGIQLEVTARFKTHLINEGYNPIYGARPLRRAVMRLLEDTLSEEFLAEKIKEGDTAVVDVDDDGKVKVLLGEKLELVAN.

A Clp R domain is found at 2–144 (FERFTEKAIK…RTQVIRLLGD (143 aa)). Repeat regions lie at residues 5 to 70 (FTEK…IGRG) and 80 to 144 (FTPR…LLGD). Positions 162-409 (LEEFGSNLTQ…RVRLMNSQLP (248 aa)) are i. 207–214 (GEPGVGKT) is an ATP binding site. In terms of domain architecture, UVR spans 416–451 (DKELREILKQKDEAVRSQDFETAGQLRDREMEIKAQ). The segment at 472–663 (VTEEDIAQIV…LLILTSNVGS (192 aa)) is II. 546–553 (GPTGVGKT) contacts ATP.

Belongs to the ClpA/ClpB family.

The protein resides in the plastid. Its subcellular location is the chloroplast. Functionally, may interact with a ClpP-like protease involved in degradation of denatured proteins in the chloroplast. The chain is ATP-dependent Clp protease ATP-binding subunit ClpA homolog (clpC) from Guillardia theta (Cryptophyte).